We begin with the raw amino-acid sequence, 258 residues long: Indole-3-glycerol phosphate synthase (258 aa).

This sequence belongs to the TrpC family.

It carries out the reaction 1-(2-carboxyphenylamino)-1-deoxy-D-ribulose 5-phosphate + H(+) = (1S,2R)-1-C-(indol-3-yl)glycerol 3-phosphate + CO2 + H2O. The protein operates within amino-acid biosynthesis; L-tryptophan biosynthesis; L-tryptophan from chorismate: step 4/5. The polypeptide is Indole-3-glycerol phosphate synthase (Legionella pneumophila (strain Lens)).